The sequence spans 393 residues: Sulfate adenylyltransferase (393 aa).

This sequence belongs to the sulfate adenylyltransferase family.

The catalysed reaction is sulfate + ATP + H(+) = adenosine 5'-phosphosulfate + diphosphate. The protein operates within sulfur metabolism; hydrogen sulfide biosynthesis; sulfite from sulfate: step 1/3. The polypeptide is Sulfate adenylyltransferase (Symbiobacterium thermophilum (strain DSM 24528 / JCM 14929 / IAM 14863 / T)).